We begin with the raw amino-acid sequence, 202 residues long: Ras-related protein RABD2b (202 aa).

Residues 15–23, 33–40, 63–67, 121–124, and 151–153 contribute to the GTP site; these read GDSGVGKSC, YLDSYIST, DTAGQ, NKND, and SAK. The Effector region signature appears at 37–45; that stretch reads YISTIGVDF. The tract at residues 174–202 is disordered; that stretch reads ASQPAGGAKPPTVQIRGQPVNQQSGCCSS. The span at 192-202 shows a compositional bias: polar residues; that stretch reads PVNQQSGCCSS. 2 S-geranylgeranyl cysteine lipidation sites follow: Cys199 and Cys200.

Belongs to the small GTPase superfamily. Rab family.

Its subcellular location is the golgi apparatus. The protein localises to the trans-Golgi network membrane. It is found in the golgi apparatus membrane. In terms of biological role, protein transport. Regulator of membrane traffic from the Golgi apparatus towards the endoplasmic reticulum (ER). This is Ras-related protein RABD2b (RABD2B) from Arabidopsis thaliana (Mouse-ear cress).